The sequence spans 108 residues: uncharacterized protein (108 aa).

This is an uncharacterized protein from Escherichia coli (Bacteriophage N4).